The sequence spans 160 residues: 6,7-dimethyl-8-ribityllumazine synthase (160 aa).

Residues Phe22, 57–59 (TYE), and 81–83 (TII) contribute to the 5-amino-6-(D-ribitylamino)uracil site. (2S)-2-hydroxy-3-oxobutyl phosphate is bound at residue 86 to 87 (QT). The active-site Proton donor is the His89. Position 114 (Leu114) interacts with 5-amino-6-(D-ribitylamino)uracil. Position 128 (Arg128) interacts with (2S)-2-hydroxy-3-oxobutyl phosphate.

It belongs to the DMRL synthase family. Forms an icosahedral capsid composed of 60 subunits, arranged as a dodecamer of pentamers.

It carries out the reaction (2S)-2-hydroxy-3-oxobutyl phosphate + 5-amino-6-(D-ribitylamino)uracil = 6,7-dimethyl-8-(1-D-ribityl)lumazine + phosphate + 2 H2O + H(+). Its pathway is cofactor biosynthesis; riboflavin biosynthesis; riboflavin from 2-hydroxy-3-oxobutyl phosphate and 5-amino-6-(D-ribitylamino)uracil: step 1/2. Catalyzes the formation of 6,7-dimethyl-8-ribityllumazine by condensation of 5-amino-6-(D-ribitylamino)uracil with 3,4-dihydroxy-2-butanone 4-phosphate. This is the penultimate step in the biosynthesis of riboflavin. This Buchnera aphidicola subsp. Acyrthosiphon pisum (strain Tuc7) protein is 6,7-dimethyl-8-ribityllumazine synthase.